A 609-amino-acid chain; its full sequence is ATP-dependent lipid A-core flippase (609 aa).

Transmembrane regions (helical) follow at residues 47 to 67 (LLAA…IYLI), 88 to 108 (ILML…VGSF), 167 to 187 (AIIT…VMFV), 190 to 210 (WQLS…ISII), 279 to 299 (VIQI…AIFG), and 305 to 325 (GSSW…AAIL). In terms of domain architecture, ABC transmembrane type-1 spans 47 to 340 (LLAAIGSIFF…LTKVNVVIQK (294 aa)). In terms of domain architecture, ABC transporter spans 372 to 606 (VTIKDLSFAF…GGLYTRLYQS (235 aa)). ATP is bound at residue 404–411 (GKSGSGKT).

The protein belongs to the ABC transporter superfamily. Lipid exporter (TC 3.A.1.106) family. As to quaternary structure, homodimer.

The protein localises to the cell inner membrane. It catalyses the reaction ATP + H2O + lipid A-core oligosaccharideSide 1 = ADP + phosphate + lipid A-core oligosaccharideSide 2.. In terms of biological role, involved in lipopolysaccharide (LPS) biosynthesis. Translocates lipid A-core from the inner to the outer leaflet of the inner membrane. Transmembrane domains (TMD) form a pore in the inner membrane and the ATP-binding domain (NBD) is responsible for energy generation. The chain is ATP-dependent lipid A-core flippase from Francisella tularensis subsp. tularensis (strain FSC 198).